Here is a 318-residue protein sequence, read N- to C-terminus: NADH-ubiquinone oxidoreductase chain 1 (318 aa).

Helical transmembrane passes span 2-22 (FMVNLLMLVIPVMLAMAFLTL), 71-91 (YIIAPTLALSIALIMWTPLPI), 98-118 (INLGVLFILATSSLAVYSILW), 146-166 (LAIILLCILLMSGSFTLSTLI), 171-191 (HTWLLLPSWPLAMMWFISTLA), 222-242 (LFFMAEYTNIIMMNALTATIF), 253-273 (EFFSINFTLKTLLLTTIFLWV), and 294-314 (LPLTLAMCMWHTALPIFLANI).

Belongs to the complex I subunit 1 family.

The protein localises to the mitochondrion inner membrane. It catalyses the reaction a ubiquinone + NADH + 5 H(+)(in) = a ubiquinol + NAD(+) + 4 H(+)(out). Core subunit of the mitochondrial membrane respiratory chain NADH dehydrogenase (Complex I) that is believed to belong to the minimal assembly required for catalysis. Complex I functions in the transfer of electrons from NADH to the respiratory chain. The immediate electron acceptor for the enzyme is believed to be ubiquinone. The polypeptide is NADH-ubiquinone oxidoreductase chain 1 (MT-ND1) (Nycticebus coucang (Slow loris)).